We begin with the raw amino-acid sequence, 364 residues long: Pre-small/secreted glycoprotein (364 aa).

An N-terminal signal peptide occupies residues Met1–Ser32. N-linked (GlcNAc...) asparagine; by host glycosylation is present at Asn40. Cystine bridges form between Cys108-Cys135 and Cys121-Cys147. 5 N-linked (GlcNAc...) asparagine; by host glycosylation sites follow: Asn204, Asn228, Asn238, Asn257, and Asn268.

It belongs to the filoviruses glycoprotein family. Homodimer; disulfide-linked. The homodimers are linked by two disulfide bonds in a parallel orientation. As to quaternary structure, monomer. This precursor is processed into mature sGP and delta-peptide by host furin or furin-like proteases. The cleavage site corresponds to the furin optimal cleavage sequence [KR]-X-[KR]-R. Post-translationally, N-glycosylated. In terms of processing, O-glycosylated.

It localises to the secreted. Functionally, seems to possess an anti-inflammatory activity as it can reverse the barrier-decreasing effects of TNF alpha. Might therefore contribute to the lack of inflammatory reaction seen during infection in spite the of extensive necrosis and massive virus production. Does not seem to be involved in activation of primary macrophages. Does not seem to interact specifically with neutrophils. Viroporin that permeabilizes mammalian cell plasma membranes. It acts by altering permeation of ionic compounds and small molecules. This activity may lead to viral enterotoxic activity. The chain is Pre-small/secreted glycoprotein (GP) from Epomops franqueti (Franquet's epauletted fruit bat).